We begin with the raw amino-acid sequence, 711 residues long: DNA topoisomerase 3 (711 aa).

Residues Lys2–Thr135 enclose the Toprim domain. The Mg(2+) site is built by Glu8 and Asp104. A Topo IA-type catalytic domain is found at Tyr152 to Val580. The segment at Ser186 to Gln191 is interaction with DNA. Tyr305 acts as the O-(5'-phospho-DNA)-tyrosine intermediate in catalysis. A disordered region spans residues Met691–Leu711.

The protein belongs to the type IA topoisomerase family. Mg(2+) is required as a cofactor.

It catalyses the reaction ATP-independent breakage of single-stranded DNA, followed by passage and rejoining.. Releases the supercoiling and torsional tension of DNA, which is introduced during the DNA replication and transcription, by transiently cleaving and rejoining one strand of the DNA duplex. Introduces a single-strand break via transesterification at a target site in duplex DNA. The scissile phosphodiester is attacked by the catalytic tyrosine of the enzyme, resulting in the formation of a DNA-(5'-phosphotyrosyl)-enzyme intermediate and the expulsion of a 3'-OH DNA strand. The free DNA strand then undergoes passage around the unbroken strand, thus removing DNA supercoils. Finally, in the religation step, the DNA 3'-OH attacks the covalent intermediate to expel the active-site tyrosine and restore the DNA phosphodiester backbone. In Staphylococcus aureus (strain Mu50 / ATCC 700699), this protein is DNA topoisomerase 3.